An 829-amino-acid chain; its full sequence is Periplasmic nitrate reductase (829 aa).

The tat-type signal signal peptide spans 1 to 29 (MKMTRRAFVKANAAASAAAVAGITLPASA). The region spanning 41-97 (ITWDKAPCRFCGTGCSVLVGTQNGKVVATQGDPEAPVNKGLNCIKGYFLSKIMYGQD) is the 4Fe-4S Mo/W bis-MGD-type domain. [4Fe-4S] cluster is bound by residues Cys48, Cys51, Cys55, and Cys83. Mo-bis(molybdopterin guanine dinucleotide) contacts are provided by residues Lys85, Gln152, Asn177, Cys181, 214-221 (WGSNMAEM), 245-249 (STYYH), 264-266 (QSD), Met374, Gln378, Asn484, 510-511 (SD), Lys533, Asp560, and 718-727 (TGRVLEHWHT). Phe794 provides a ligand contact to substrate. Residues Asn802 and Lys819 each contribute to the Mo-bis(molybdopterin guanine dinucleotide) site.

The protein belongs to the prokaryotic molybdopterin-containing oxidoreductase family. NasA/NapA/NarB subfamily. In terms of assembly, component of the periplasmic nitrate reductase NapAB complex composed of NapA and NapB. It depends on [4Fe-4S] cluster as a cofactor. Mo-bis(molybdopterin guanine dinucleotide) serves as cofactor. In terms of processing, predicted to be exported by the Tat system. The position of the signal peptide cleavage has not been experimentally proven.

The protein resides in the periplasm. The enzyme catalyses 2 Fe(II)-[cytochrome] + nitrate + 2 H(+) = 2 Fe(III)-[cytochrome] + nitrite + H2O. Catalytic subunit of the periplasmic nitrate reductase complex NapAB. Receives electrons from NapB and catalyzes the reduction of nitrate to nitrite. In Vibrio campbellii (strain ATCC BAA-1116), this protein is Periplasmic nitrate reductase.